Consider the following 346-residue polypeptide: Fructose-1,6-bisphosphatase class 1 (346 aa).

Mg(2+) contacts are provided by glutamate 96, aspartate 119, leucine 121, and aspartate 122. Substrate is bound by residues 122–125, asparagine 214, tyrosine 247, and lysine 277; that span reads DGSS. Glutamate 283 lines the Mg(2+) pocket.

The protein belongs to the FBPase class 1 family. In terms of assembly, homotetramer. Requires Mg(2+) as cofactor.

Its subcellular location is the cytoplasm. The catalysed reaction is beta-D-fructose 1,6-bisphosphate + H2O = beta-D-fructose 6-phosphate + phosphate. It functions in the pathway carbohydrate biosynthesis; gluconeogenesis. The chain is Fructose-1,6-bisphosphatase class 1 from Cytophaga hutchinsonii (strain ATCC 33406 / DSM 1761 / CIP 103989 / NBRC 15051 / NCIMB 9469 / D465).